The sequence spans 235 residues: Casparian strip membrane protein 2 (235 aa).

The segment at 1 to 46 (MSGSDTSGSVHVDEHGHGKASSSYDGAGAPAPAPAPFQGHRKAGSG) is disordered. Over 1-67 (MSGSDTSGSV…GSGGDGLRRC (67 aa)) the chain is Cytoplasmic. The helical transmembrane segment at 68–88 (LGLIDFVLRVAAFGPTLAAAI) threads the bilayer. The Extracellular segment spans residues 89–115 (SIGTSDERLSVFTNYFQFRARFDDFPA). A helical transmembrane segment spans residues 116–136 (FEFFIVANAIAAGYMVLSLPF). The Cytoplasmic portion of the chain corresponds to 137–150 (SAATIMSSKATGVK). Residues 151 to 171 (LLLLICDTIMVGLLTAAASAA) traverse the membrane as a helical segment. Residues 172–203 (AAMVYVAHEGNLRANWVPICLQFHGFCQRTSG) are Extracellular-facing. The chain crosses the membrane as a helical span at residues 204–224 (AVIASFLAVFVLMVLIVMAAF). Residues 225 to 235 (TMPRRTHHTAS) are Cytoplasmic-facing.

Belongs to the Casparian strip membrane proteins (CASP) family. In terms of assembly, homodimer and heterodimers.

The protein resides in the cell membrane. In terms of biological role, regulates membrane-cell wall junctions and localized cell wall deposition. Required for establishment of the Casparian strip membrane domain (CSD) and the subsequent formation of Casparian strips, a cell wall modification of the root endodermis that determines an apoplastic barrier between the intraorganismal apoplasm and the extraorganismal apoplasm and prevents lateral diffusion. The sequence is that of Casparian strip membrane protein 2 from Oryza sativa subsp. indica (Rice).